Here is a 482-residue protein sequence, read N- to C-terminus: Bifunctional protein GlmU (482 aa).

Positions 1 to 238 are pyrophosphorylase; that stretch reads MSAIRPAAVV…HREIAGINNR (238 aa). UDP-N-acetyl-alpha-D-glucosamine-binding positions include 12–15, Lys-26, Gln-79, and 84–85; these read LAAG and GT. Position 110 (Asp-110) interacts with Mg(2+). UDP-N-acetyl-alpha-D-glucosamine contacts are provided by Gly-147, Glu-163, Asn-178, and Asn-236. Mg(2+) is bound at residue Asn-236. The linker stretch occupies residues 239–259; the sequence is VQLAEARRILNDRLLTRAMLA. The segment at 260–482 is N-acetyltransferase; sequence GVTVVDPATT…VASRKPEGED (223 aa). Arg-341 and Lys-359 together coordinate UDP-N-acetyl-alpha-D-glucosamine. The active-site Proton acceptor is His-371. The UDP-N-acetyl-alpha-D-glucosamine site is built by Tyr-374 and Asn-385. Acetyl-CoA contacts are provided by residues Ala-388, 394 to 395, Ser-413, Ala-431, and Arg-448; that span reads NY.

This sequence in the N-terminal section; belongs to the N-acetylglucosamine-1-phosphate uridyltransferase family. The protein in the C-terminal section; belongs to the transferase hexapeptide repeat family. In terms of assembly, homotrimer. Requires Mg(2+) as cofactor.

The protein resides in the cytoplasm. It catalyses the reaction alpha-D-glucosamine 1-phosphate + acetyl-CoA = N-acetyl-alpha-D-glucosamine 1-phosphate + CoA + H(+). It carries out the reaction N-acetyl-alpha-D-glucosamine 1-phosphate + UTP + H(+) = UDP-N-acetyl-alpha-D-glucosamine + diphosphate. It functions in the pathway nucleotide-sugar biosynthesis; UDP-N-acetyl-alpha-D-glucosamine biosynthesis; N-acetyl-alpha-D-glucosamine 1-phosphate from alpha-D-glucosamine 6-phosphate (route II): step 2/2. It participates in nucleotide-sugar biosynthesis; UDP-N-acetyl-alpha-D-glucosamine biosynthesis; UDP-N-acetyl-alpha-D-glucosamine from N-acetyl-alpha-D-glucosamine 1-phosphate: step 1/1. The protein operates within bacterial outer membrane biogenesis; LPS lipid A biosynthesis. Catalyzes the last two sequential reactions in the de novo biosynthetic pathway for UDP-N-acetylglucosamine (UDP-GlcNAc). The C-terminal domain catalyzes the transfer of acetyl group from acetyl coenzyme A to glucosamine-1-phosphate (GlcN-1-P) to produce N-acetylglucosamine-1-phosphate (GlcNAc-1-P), which is converted into UDP-GlcNAc by the transfer of uridine 5-monophosphate (from uridine 5-triphosphate), a reaction catalyzed by the N-terminal domain. The chain is Bifunctional protein GlmU from Streptomyces avermitilis (strain ATCC 31267 / DSM 46492 / JCM 5070 / NBRC 14893 / NCIMB 12804 / NRRL 8165 / MA-4680).